A 265-amino-acid chain; its full sequence is 5'-nucleotidase SurE (265 aa).

The a divalent metal cation site is built by Asp8, Asp9, Ser39, and Asn96.

This sequence belongs to the SurE nucleotidase family. Requires a divalent metal cation as cofactor.

The protein localises to the cytoplasm. The enzyme catalyses a ribonucleoside 5'-phosphate + H2O = a ribonucleoside + phosphate. Nucleotidase that shows phosphatase activity on nucleoside 5'-monophosphates. This chain is 5'-nucleotidase SurE, found in Dehalococcoides mccartyi (strain CBDB1).